Reading from the N-terminus, the 344-residue chain is MISSEEKVEFLRKLVEIYSPTGRESEAVKFIVESFESFGVDAYVDEVGNAIAIREGKGPRILLAGHVDTVPGIIPVRIEDGVLWGRGSVDAKGPLATFFFATLESNANIIFAGLVDEEGFSKGAKNLDVPRPDYIIIGEPSGVDGVTIGYKGSLTAKFVESVEKVHGSLGVDAAERLINRWLEIKSSFGEGFDALSGRIVELHAYERDFDFYGEMVINLRTPPGYNPPKGWEILDFVPAYQVDRRSPLVRAFVRGIRRNGMRPRLKKKTGTADMNILGPRFGVDAVAYGPGDSRLDHTPHERISLSEYLLAIDVLVDVIEELKGAKERAAEESGEREAGKALSG.

Residue H66 participates in Zn(2+) binding. Residue D68 is part of the active site. D90 contributes to the Zn(2+) binding site. E117 serves as the catalytic Proton acceptor. Residues E118, E139, and H297 each contribute to the Zn(2+) site.

This sequence belongs to the peptidase M20A family. LysK subfamily. Requires Zn(2+) as cofactor. Co(2+) serves as cofactor.

It localises to the cytoplasm. It catalyses the reaction [amino-group carrier protein]-C-terminal-gamma-(L-lysyl)-L-glutamate + H2O = [amino-group carrier protein]-C-terminal-L-glutamate + L-lysine. It carries out the reaction [amino-group carrier protein]-C-terminal-gamma-(L-ornithyl)-L-glutamate + H2O = [amino-group carrier protein]-C-terminal-L-glutamate + L-ornithine. It functions in the pathway amino-acid biosynthesis; L-lysine biosynthesis via AAA pathway; L-lysine from L-alpha-aminoadipate (Thermus route): step 5/5. Its pathway is amino-acid biosynthesis; L-arginine biosynthesis. In terms of biological role, catalyzes the release of L-lysine from [LysW]-gamma-L-lysine and the release of L-ornithine from [LysW]-L-ornithine. This is Putative [LysW]-lysine/[LysW]-ornithine hydrolase from Thermococcus kodakarensis (strain ATCC BAA-918 / JCM 12380 / KOD1) (Pyrococcus kodakaraensis (strain KOD1)).